A 548-amino-acid chain; its full sequence is Lipase 2 (548 aa).

A signal peptide spans 1 to 14; it reads MKLCLLALGAAVAA. Cysteines 74 and 111 form a disulfide. The active-site Acyl-ester intermediate is serine 223. Residues cysteine 282 and cysteine 291 are joined by a disulfide bond. Glutamate 355 functions as the Charge relay system in the catalytic mechanism. The N-linked (GlcNAc...) asparagine glycan is linked to asparagine 365. Histidine 463 serves as the catalytic Charge relay system.

The protein belongs to the type-B carboxylesterase/lipase family.

The catalysed reaction is a triacylglycerol + H2O = a diacylglycerol + a fatty acid + H(+). The chain is Lipase 2 (LIP2) from Diutina rugosa (Yeast).